A 58-amino-acid polypeptide reads, in one-letter code: ATP synthase F(0) complex subunit k, mitochondrial (58 aa).

Residues Lys-16 and Lys-17 each carry the N6-acetyllysine modification. A helical transmembrane segment spans residues 23 to 45 (TLTGRMNCVLATYGSIALIVLYF).

Component of the ATP synthase complex composed at least of ATP5F1A/subunit alpha, ATP5F1B/subunit beta, ATP5MC1/subunit c (homooctomer), MT-ATP6/subunit a, MT-ATP8/subunit 8, ATP5ME/subunit e, ATP5MF/subunit f, ATP5MG/subunit g, ATP5MK/subunit k, ATP5MJ/subunit j, ATP5F1C/subunit gamma, ATP5F1D/subunit delta, ATP5F1E/subunit epsilon, ATP5PF/subunit F6, ATP5PB/subunit b, ATP5PD/subunit d, ATP5PO/subunit OSCP. ATP synthase complex consists of a soluble F(1) head domain (subunits alpha(3) and beta(3)) - the catalytic core - and a membrane F(0) domain - the membrane proton channel (subunits c, a, 8, e, f, g, k and j). These two domains are linked by a central stalk (subunits gamma, delta, and epsilon) rotating inside the F1 region and a stationary peripheral stalk (subunits F6, b, d, and OSCP). The ATP synthase complex/complex V exists as a monomeric and a dimeric supercomplex that helps shape mitochondrial cristae to optimize proton flow.

It localises to the mitochondrion membrane. Its function is as follows. Subunit k, of the mitochondrial membrane ATP synthase complex (F(1)F(0) ATP synthase or Complex V) that produces ATP from ADP in the presence of a proton gradient across the membrane which is generated by electron transport complexes of the respiratory chain. ATP synthase complex consist of a soluble F(1) head domain - the catalytic core - and a membrane F(1) domain - the membrane proton channel. These two domains are linked by a central stalk rotating inside the F(1) region and a stationary peripheral stalk. During catalysis, ATP synthesis in the catalytic domain of F(1) is coupled via a rotary mechanism of the central stalk subunits to proton translocation. In vivo, can only synthesize ATP although its ATP hydrolase activity can be activated artificially in vitro. Part of the complex F(0) domain. Required for dimerization of the ATP synthase complex and as such regulates ATP synthesis in the mitochondria. In Homo sapiens (Human), this protein is ATP synthase F(0) complex subunit k, mitochondrial.